The following is a 360-amino-acid chain: Endolytic murein transglycosylase (360 aa).

The helical transmembrane segment at 16 to 36 (IILSSIVVLFLIIGGAFLYGK) threads the bilayer.

Belongs to the transglycosylase MltG family.

Its subcellular location is the cell membrane. It carries out the reaction a peptidoglycan chain = a peptidoglycan chain with N-acetyl-1,6-anhydromuramyl-[peptide] at the reducing end + a peptidoglycan chain with N-acetylglucosamine at the non-reducing end.. In terms of biological role, functions as a peptidoglycan terminase that cleaves nascent peptidoglycan strands endolytically to terminate their elongation. The polypeptide is Endolytic murein transglycosylase (Bacillus subtilis (strain 168)).